Reading from the N-terminus, the 2463-residue chain is Protein TIC 214 (2463 aa).

A run of 6 helical transmembrane segments spans residues 18 to 38 (VGLY…LFLL), 60 to 80 (FFTG…HLAL), 86 to 106 (ILLL…SGQW), 127 to 147 (LVFL…GRPM), 170 to 190 (FVGW…VFVW), and 297 to 317 (LFSI…PLLY). A coiled-coil region spans residues 326-441 (QLQRKLSNET…AARAMQEAYK (116 aa)). Disordered regions lie at residues 792–841 (AVPK…RKVN), 1230–1249 (SIQK…GPKK), 1393–1417 (SGGR…EQDF), 2116–2136 (EEEK…KLKK), and 2162–2187 (KQRA…RKVQ). The span at 794 to 830 (PKKKKKISKSKQKNVKSKQKNVKSKQKNVKSKQKNVK) shows a compositional bias: basic residues. 3 stretches are compositionally biased toward basic and acidic residues: residues 832–841 (KQNEIKRKVN), 1231–1249 (IQKD…GPKK), and 1397–1417 (ETPE…EQDF). The stretch at 2049 to 2192 (WDALVASLKQ…KRKVQVQENK (144 aa)) forms a coiled coil. Residues 2124–2136 (KRKKERKKEKLKK) show a composition bias toward basic residues.

The protein belongs to the TIC214 family. As to quaternary structure, part of the Tic complex.

It is found in the plastid. The protein localises to the chloroplast inner membrane. Its function is as follows. Involved in protein precursor import into chloroplasts. May be part of an intermediate translocation complex acting as a protein-conducting channel at the inner envelope. This chain is Protein TIC 214, found in Oenothera elata subsp. hookeri (Hooker's evening primrose).